The primary structure comprises 157 residues: Ribonuclease H (157 aa).

The RNase H type-1 domain occupies N3–T144. Positions 12, 50, 72, and 136 each coordinate Mg(2+).

This sequence belongs to the RNase H family. As to quaternary structure, monomer. Mg(2+) is required as a cofactor.

The protein resides in the cytoplasm. It carries out the reaction Endonucleolytic cleavage to 5'-phosphomonoester.. In terms of biological role, endonuclease that specifically degrades the RNA of RNA-DNA hybrids. The chain is Ribonuclease H from Idiomarina loihiensis (strain ATCC BAA-735 / DSM 15497 / L2-TR).